We begin with the raw amino-acid sequence, 182 residues long: Transcription antitermination protein NusB (182 aa).

Residues 159–182 (TPVENSEAEAAGYPVEESIEEDSQ) form a disordered region.

Belongs to the NusB family.

In terms of biological role, involved in transcription antitermination. Required for transcription of ribosomal RNA (rRNA) genes. Binds specifically to the boxA antiterminator sequence of the ribosomal RNA (rrn) operons. The chain is Transcription antitermination protein NusB from Corynebacterium diphtheriae (strain ATCC 700971 / NCTC 13129 / Biotype gravis).